A 72-amino-acid polypeptide reads, in one-letter code: Probable neurotoxin pcD-996 (72 aa).

The N-terminal stretch at 1 to 19 (MNYLVMISFALLLVIGVES) is a signal peptide. In terms of domain architecture, LCN-type CS-alpha/beta spans 21–72 (RDGYFVEPDNCLVYCMPSPEICDRGCKRYGATSGFCKEFSKGENFCWCKGLR). 3 disulfide bridges follow: cysteine 35–cysteine 56, cysteine 42–cysteine 66, and cysteine 46–cysteine 68. A propeptide (removed by a carboxypeptidase) is located at residue arginine 72.

It belongs to the long (3 C-C) scorpion toxin superfamily. As to expression, expressed by the venom gland.

It is found in the secreted. This is Probable neurotoxin pcD-996 from Androctonus australis (Sahara scorpion).